A 351-amino-acid chain; its full sequence is GMP reductase (351 aa).

Position 108-131 (108-131 (EDFVKLKQILSLSSKLKYICIDVA)) interacts with NADP(+). 2 residues coordinate K(+): Gly-181 and Gly-183. Catalysis depends on Cys-186, which acts as the Thioimidate intermediate. 216 to 239 (IISDGGCVVSGDIAKAFGGGADFV) contributes to the NADP(+) binding site.

The protein belongs to the IMPDH/GMPR family. GuaC type 1 subfamily. As to quaternary structure, homotetramer.

It carries out the reaction IMP + NH4(+) + NADP(+) = GMP + NADPH + 2 H(+). Functionally, catalyzes the irreversible NADPH-dependent deamination of GMP to IMP. It functions in the conversion of nucleobase, nucleoside and nucleotide derivatives of G to A nucleotides, and in maintaining the intracellular balance of A and G nucleotides. This Buchnera aphidicola subsp. Baizongia pistaciae (strain Bp) protein is GMP reductase (guaC).